Consider the following 219-residue polypeptide: NADH-quinone oxidoreductase subunit C (219 aa).

Belongs to the complex I 30 kDa subunit family. In terms of assembly, NDH-1 is composed of 14 different subunits. Subunits NuoB, C, D, E, F, and G constitute the peripheral sector of the complex.

Its subcellular location is the cell inner membrane. It catalyses the reaction a quinone + NADH + 5 H(+)(in) = a quinol + NAD(+) + 4 H(+)(out). In terms of biological role, NDH-1 shuttles electrons from NADH, via FMN and iron-sulfur (Fe-S) centers, to quinones in the respiratory chain. The immediate electron acceptor for the enzyme in this species is believed to be ubiquinone. Couples the redox reaction to proton translocation (for every two electrons transferred, four hydrogen ions are translocated across the cytoplasmic membrane), and thus conserves the redox energy in a proton gradient. The protein is NADH-quinone oxidoreductase subunit C of Methylorubrum extorquens (strain PA1) (Methylobacterium extorquens).